A 232-amino-acid chain; its full sequence is Somatolactin (232 aa).

The signal sequence occupies residues 1–16 (MHNWKGVWLCSLFLTF). Cystine bridges form between Cys31–Cys41, Cys91–Cys206, and Cys223–Cys231. Residue Asn147 is glycosylated (N-linked (GlcNAc...) asparagine).

The protein belongs to the somatotropin/prolactin family. As to expression, pituitary gland.

It is found in the secreted. The polypeptide is Somatolactin (Protopterus annectens (African lungfish)).